A 1441-amino-acid polypeptide reads, in one-letter code: ABC transporter G family member 51 (1441 aa).

Positions 52–71 (VLPDPDGLGGGDGGGRGEGQ) are disordered. Gly residues predominate over residues 58–69 (GLGGGDGGGRGE). The ABC transporter 1 domain maps to 154-428 (LISSHLLRPD…FKSLGFSLPP (275 aa)). Residue 187 to 194 (GPPASGKS) coordinates ATP. The 214-residue stretch at 505 to 718 (SLVRACFARE…AQRAVSVNEF (214 aa)) folds into the ABC transmembrane type-2 1 domain. 6 helical membrane passes run 523 to 543 (FLYTFRTCQVAFVGIITSTLF), 558 to 578 (LYLACLFFGLVHMMFNGFTEM), 615 to 635 (FIEAVVWSCVVYYTVGFAPTV), 642 to 662 (MLLLFSIHQMALGLFRMMGAI), 668 to 688 (IASTFGSAVLLAIFLLGGFVV), and 751 to 771 (FWIGVGVLLAYSIFFNIMFTL). Positions 838-1090 (MTFHNVNYYV…DMINYFQGIP (253 aa)) constitute an ABC transporter 2 domain. 883–890 (GASGSGKT) lines the ATP pocket. In terms of domain architecture, ABC transmembrane type-2 2 spans 1163–1380 (TQFMVCLRKQ…TLRGVITSQL (218 aa)). Helical transmembrane passes span 1184 to 1204 (VVRLFFTSVAAIIFGSIFWNV), 1214 to 1234 (ILLLMGALYAACLFLGVNNAS), 1271 to 1291 (VEIPYIAVQTLIFGLITYFMV), 1300 to 1320 (LVLYLIYMFLTFTYFTFYGMV), 1330 to 1350 (MASVVSSAFYSLWNLLSGFLI), 1355 to 1375 (IPGWWIWFYYICPVAWTLRGV), and 1413 to 1433 (ATVAVLVAFSVFFFSIYAISI).

Belongs to the ABC transporter superfamily. ABCG family. PDR (TC 3.A.1.205) subfamily.

The protein localises to the membrane. Its function is as follows. May be a general defense protein. This is ABC transporter G family member 51 from Oryza sativa subsp. japonica (Rice).